A 257-amino-acid polypeptide reads, in one-letter code: UPF0246 protein lpl1317 (257 aa).

It belongs to the UPF0246 family.

The protein is UPF0246 protein lpl1317 of Legionella pneumophila (strain Lens).